Here is a 622-residue protein sequence, read N- to C-terminus: Membrane protein insertase YidC (622 aa).

The helical transmembrane segment at L8–P28 threads the bilayer. Residues K33–R61 show a composition bias toward basic and acidic residues. The disordered stretch occupies residues K33–K70. Transmembrane regions (helical) follow at residues F413–F433, V484–F504, A532–G552, and M571–V591.

This sequence belongs to the OXA1/ALB3/YidC family. Type 1 subfamily. Interacts with the Sec translocase complex via SecD. Specifically interacts with transmembrane segments of nascent integral membrane proteins during membrane integration.

It localises to the cell inner membrane. Its function is as follows. Required for the insertion and/or proper folding and/or complex formation of integral membrane proteins into the membrane. Involved in integration of membrane proteins that insert both dependently and independently of the Sec translocase complex, as well as at least some lipoproteins. Aids folding of multispanning membrane proteins. The chain is Membrane protein insertase YidC from Leptospira borgpetersenii serovar Hardjo-bovis (strain JB197).